The following is a 408-amino-acid chain: Myb/SANT-like DNA-binding domain-containing protein 4 (408 aa).

In terms of domain architecture, Myb-like spans 4–77 (LKRKRKSNFS…EVKRRYLDWR (74 aa)). Residues 236–367 (HLLVTLEKQK…IEKERLQDAL (132 aa)) are a coiled coil.

This Xenopus tropicalis (Western clawed frog) protein is Myb/SANT-like DNA-binding domain-containing protein 4 (msantd4).